The following is a 341-amino-acid chain: 4-hydroxy-2-oxovalerate aldolase (341 aa).

The region spanning V9–L260 is the Pyruvate carboxyltransferase domain. R17 to D18 contributes to the substrate binding site. D18 lines the Mn(2+) pocket. The Proton acceptor role is filled by H21. Substrate contacts are provided by S172 and H199. Positions 199 and 201 each coordinate Mn(2+).

The protein belongs to the 4-hydroxy-2-oxovalerate aldolase family.

The enzyme catalyses (S)-4-hydroxy-2-oxopentanoate = acetaldehyde + pyruvate. The sequence is that of 4-hydroxy-2-oxovalerate aldolase from Spirochaeta aurantia.